A 447-amino-acid chain; its full sequence is Tubulin beta-1 chain (447 aa).

GTP contacts are provided by Q11, E69, S138, G142, T143, G144, N204, and N226. E69 contacts Mg(2+). Positions 427–447 are disordered; it reads EATADEDAEFEEEQEAEVEEN. Residues 429–447 show a composition bias toward acidic residues; that stretch reads TADEDAEFEEEQEAEVEEN.

Belongs to the tubulin family. As to quaternary structure, dimer of alpha and beta chains. A typical microtubule is a hollow water-filled tube with an outer diameter of 25 nm and an inner diameter of 15 nM. Alpha-beta heterodimers associate head-to-tail to form protofilaments running lengthwise along the microtubule wall with the beta-tubulin subunit facing the microtubule plus end conferring a structural polarity. Microtubules usually have 13 protofilaments but different protofilament numbers can be found in some organisms and specialized cells. Requires Mg(2+) as cofactor.

Its subcellular location is the cytoplasm. The protein localises to the cytoskeleton. Its function is as follows. Tubulin is the major constituent of microtubules, a cylinder consisting of laterally associated linear protofilaments composed of alpha- and beta-tubulin heterodimers. Microtubules grow by the addition of GTP-tubulin dimers to the microtubule end, where a stabilizing cap forms. Below the cap, tubulin dimers are in GDP-bound state, owing to GTPase activity of alpha-tubulin. The chain is Tubulin beta-1 chain from Glossina morsitans morsitans (Savannah tsetse fly).